The sequence spans 542 residues: Chitinase 2 (542 aa).

A signal peptide spans 1–22 (MLTRTFLGMAISAFLASTGVQA). One can recognise a GH18 domain in the interval 29 to 314 (PNVMYYWGQN…SQLYSLVHSG (286 aa)). E166 (proton donor) is an active-site residue. Positions 312 to 356 (HSGGSTPPPPSSSSATKTTTKTTATSTKTTTTTAPTATSTPGSCP) are disordered. Positions 323–354 (SSSATKTTTKTTATSTKTTTTTAPTATSTPGS) are enriched in low complexity. Residues 355-406 (CPVANQPCSTQNQYACTADGKYAVCDHGKWVASSCPSNTVCIPTTDGASIYC) are chitin-binding, high affinity. A propeptide spanning residues 447 to 542 (AQLAVTSTDK…APSTSAWNFK (96 aa)) is cleaved from the precursor.

The protein belongs to the glycosyl hydrolase 18 family. Chitinase class III subfamily. As to quaternary structure, monomer. Post-translationally, O-glycosylated.

The protein resides in the secreted. It catalyses the reaction Random endo-hydrolysis of N-acetyl-beta-D-glucosaminide (1-&gt;4)-beta-linkages in chitin and chitodextrins.. In terms of biological role, probably involved in the apical growth and branching of fungal hyphae. This chain is Chitinase 2 (CHI2), found in Rhizopus oligosporus (Rhizopus microsporus var. oligosporus).